The chain runs to 113 residues: Beta-defensin 112 (113 aa).

Disulfide bonds link C54–C82, C61–C75, and C65–C83.

It belongs to the beta-defensin family.

It localises to the secreted. Has antibacterial activity. This is Beta-defensin 112 (DEFB112) from Pan troglodytes (Chimpanzee).